Reading from the N-terminus, the 546-residue chain is Chaperonin GroEL 6 (546 aa).

ATP contacts are provided by residues 30 to 33 (TLGP), K51, 87 to 91 (DGTTT), G415, and D496.

The protein belongs to the chaperonin (HSP60) family. Forms a cylinder of 14 subunits composed of two heptameric rings stacked back-to-back. Interacts with the co-chaperonin GroES.

It localises to the cytoplasm. The catalysed reaction is ATP + H2O + a folded polypeptide = ADP + phosphate + an unfolded polypeptide.. Together with its co-chaperonin GroES, plays an essential role in assisting protein folding. The GroEL-GroES system forms a nano-cage that allows encapsulation of the non-native substrate proteins and provides a physical environment optimized to promote and accelerate protein folding. The sequence is that of Chaperonin GroEL 6 from Bradyrhizobium diazoefficiens (strain JCM 10833 / BCRC 13528 / IAM 13628 / NBRC 14792 / USDA 110).